The primary structure comprises 314 residues: Thymidylate synthase (314 aa).

DUMP contacts are provided by residues arginine 21 and 176-177 (RR). Catalysis depends on cysteine 196, which acts as the Nucleophile. DUMP is bound by residues 216–219 (RSAD), asparagine 227, and 257–259 (HLY). A (6R)-5,10-methylene-5,6,7,8-tetrahydrofolate-binding site is contributed by aspartate 219. Serine 313 provides a ligand contact to (6R)-5,10-methylene-5,6,7,8-tetrahydrofolate.

It belongs to the thymidylate synthase family. Bacterial-type ThyA subfamily. In terms of assembly, homodimer.

It is found in the cytoplasm. The catalysed reaction is dUMP + (6R)-5,10-methylene-5,6,7,8-tetrahydrofolate = 7,8-dihydrofolate + dTMP. Its pathway is pyrimidine metabolism; dTTP biosynthesis. Its function is as follows. Catalyzes the reductive methylation of 2'-deoxyuridine-5'-monophosphate (dUMP) to 2'-deoxythymidine-5'-monophosphate (dTMP) while utilizing 5,10-methylenetetrahydrofolate (mTHF) as the methyl donor and reductant in the reaction, yielding dihydrofolate (DHF) as a by-product. This enzymatic reaction provides an intracellular de novo source of dTMP, an essential precursor for DNA biosynthesis. This chain is Thymidylate synthase, found in Listeria monocytogenes serotype 4b (strain F2365).